A 274-amino-acid polypeptide reads, in one-letter code: Guanylyl cyclase 1 (274 aa).

Functions both as monomer and homooligomer. Requires Mg(2+) as cofactor.

It carries out the reaction GTP = 3',5'-cyclic GMP + diphosphate. It participates in nucleotide metabolism. Functionally, magnesium-dependent guanylyl cyclase that catalyzes the formation of guanosine 3',5'-cyclic monophosphate (cGMP) from guanosine 5'-triphosphate (GTP). Can also use ATP as substrate with a low activity. The sequence is that of Guanylyl cyclase 1 from Arabidopsis thaliana (Mouse-ear cress).